A 436-amino-acid chain; its full sequence is Platelet-activating factor acetylhydrolase (436 aa).

Residues methionine 1–proline 21 form the signal peptide. N-linked (GlcNAc...) asparagine glycosylation is found at asparagine 76 and asparagine 200. The Nucleophile role is filled by serine 271. Residue aspartate 294 is the Charge relay system of the active site. Residue asparagine 324 is glycosylated (N-linked (GlcNAc...) asparagine). Histidine 349 serves as the catalytic Charge relay system.

It belongs to the AB hydrolase superfamily. Lipase family. In terms of processing, N-glycosylated. Plasma.

The protein localises to the secreted. It is found in the extracellular space. The catalysed reaction is a 1-O-alkyl-2-acetyl-sn-glycero-3-phosphocholine + H2O = a 1-O-alkyl-sn-glycero-3-phosphocholine + acetate + H(+). It carries out the reaction 1-O-decyl-2-acetyl-sn-glycero-3-phosphocholine + H2O = 1-O-decyl-sn-glycero-3-phosphocholine + acetate + H(+). The enzyme catalyses 1-O-dodecyl-2-acetyl-sn-glycero-3-phosphocholine + H2O = 1-O-dodecyl-sn-glycero-3-phosphocholine + acetate + H(+). It catalyses the reaction 1-O-tetradecyl-2-acetyl-sn-glycero-3-phosphocholine + H2O = 1-O-tetradecyl-sn-glycero-3-phosphocholine + acetate + H(+). The catalysed reaction is 1-O-hexadecyl-2-acetyl-sn-glycero-3-phosphocholine + H2O = 1-O-hexadecyl-sn-glycero-3-phosphocholine + acetate + H(+). It carries out the reaction 1-O-octadecyl-2-acetyl-sn-glycero-3-phosphocholine + H2O = 1-O-octadecyl-sn-glycero-3-phosphocholine + acetate + H(+). The enzyme catalyses 1-hexadecanoyl-2-acetyl-sn-glycero-3-phosphocholine + H2O = 1-hexadecanoyl-sn-glycero-3-phosphocholine + acetate + H(+). It catalyses the reaction 1-hexadecanoyl-2-propionyl-sn-glycero-3-phosphocholine + H2O = propanoate + 1-hexadecanoyl-sn-glycero-3-phosphocholine + H(+). The catalysed reaction is 1-hexadecanoyl-2-butanoyl-sn-glycero-3-phosphocholine + H2O = butanoate + 1-hexadecanoyl-sn-glycero-3-phosphocholine + H(+). It carries out the reaction 1-hexadecanoyl-2-pentanoyl-sn-glycero-3-phosphocholine + H2O = pentanoate + 1-hexadecanoyl-sn-glycero-3-phosphocholine + H(+). The enzyme catalyses 1-hexadecanoyl-2-glutaroyl-sn-glycero-3-phosphocholine + H2O = glutarate + 1-hexadecanoyl-sn-glycero-3-phosphocholine + H(+). It catalyses the reaction 1-hexadecanoyl-2-(5-oxopentanoyl)-sn-glycero-3-phosphocholine + H2O = 5-oxopentanoate + 1-hexadecanoyl-sn-glycero-3-phosphocholine + H(+). The catalysed reaction is 1-hexadecanoyl-2-(9-oxononanoyl)-sn-glycero-3-phosphocholine + H2O = 9-oxononanoate + 1-hexadecanoyl-sn-glycero-3-phosphocholine + H(+). It carries out the reaction 1-hexadecanoyl-2-[9-hydroperoxy-(10E-octadecenoyl)]-sn-glycero-3-phosphocholine + H2O = 9-hydroperoxy-10E-octadecenoate + 1-hexadecanoyl-sn-glycero-3-phosphocholine + H(+). The enzyme catalyses 1-hexadecanoyl-2-(10-hydroperoxy-8E-octadecenoyl)-sn-glycero-3-phosphocholine + H2O = 10-hydroperoxy-(8E)-octadecenoate + 1-hexadecanoyl-sn-glycero-3-phosphocholine + H(+). Its function is as follows. Lipoprotein-associated calcium-independent phospholipase A2 involved in phospholipid catabolism during inflammatory and oxidative stress response. At the lipid-aqueous interface, hydrolyzes the ester bond of fatty acyl group attached at sn-2 position of phospholipids (phospholipase A2 activity). Specifically targets phospholipids with a short-chain fatty acyl group at sn-2 position. Can hydrolyze phospholipids with long fatty acyl chains, only if they carry oxidized functional groups. Hydrolyzes and inactivates platelet-activating factor (PAF, 1-O-alkyl-2-acetyl-sn-glycero-3-phosphocholine), a potent pro-inflammatory signaling lipid that acts through PTAFR on various innate immune cells. Hydrolyzes oxidatively truncated phospholipids carrying an aldehyde group at omega position, preventing their accumulation in lipoprotein particles and uncontrolled pro-inflammatory effects. As part of high-density lipoprotein (HDL) particles, can hydrolyze phospholipids having long-chain fatty acyl hydroperoxides at sn-2 position and protect against potential accumulation of these oxylipins in the vascular wall. Catalyzes the release from membrane phospholipids of F2-isoprostanes, lipid biomarkers of cellular oxidative damage. This chain is Platelet-activating factor acetylhydrolase (PLA2G7), found in Cavia porcellus (Guinea pig).